We begin with the raw amino-acid sequence, 142 residues long: Large ribosomal subunit protein uL13 (142 aa).

Belongs to the universal ribosomal protein uL13 family. In terms of assembly, part of the 50S ribosomal subunit.

Its function is as follows. This protein is one of the early assembly proteins of the 50S ribosomal subunit, although it is not seen to bind rRNA by itself. It is important during the early stages of 50S assembly. The sequence is that of Large ribosomal subunit protein uL13 from Shewanella putrefaciens (strain CN-32 / ATCC BAA-453).